The chain runs to 268 residues: 4-hydroxy-tetrahydrodipicolinate reductase (268 aa).

NAD(+) is bound at residue 8 to 13 (GAAGRM). Arg36 provides a ligand contact to NADP(+). NAD(+) contacts are provided by residues 99–101 (GTT) and 123–126 (AANF). The active-site Proton donor/acceptor is His156. Residue His157 participates in (S)-2,3,4,5-tetrahydrodipicolinate binding. The active-site Proton donor is Lys160. (S)-2,3,4,5-tetrahydrodipicolinate is bound at residue 166–167 (GT).

It belongs to the DapB family.

Its subcellular location is the cytoplasm. The catalysed reaction is (S)-2,3,4,5-tetrahydrodipicolinate + NAD(+) + H2O = (2S,4S)-4-hydroxy-2,3,4,5-tetrahydrodipicolinate + NADH + H(+). It catalyses the reaction (S)-2,3,4,5-tetrahydrodipicolinate + NADP(+) + H2O = (2S,4S)-4-hydroxy-2,3,4,5-tetrahydrodipicolinate + NADPH + H(+). It participates in amino-acid biosynthesis; L-lysine biosynthesis via DAP pathway; (S)-tetrahydrodipicolinate from L-aspartate: step 4/4. In terms of biological role, catalyzes the conversion of 4-hydroxy-tetrahydrodipicolinate (HTPA) to tetrahydrodipicolinate. This chain is 4-hydroxy-tetrahydrodipicolinate reductase, found in Pseudomonas fluorescens (strain Pf0-1).